The sequence spans 230 residues: Large ribosomal subunit protein uL1 (230 aa).

It belongs to the universal ribosomal protein uL1 family. Part of the 50S ribosomal subunit.

Its function is as follows. Binds directly to 23S rRNA. The L1 stalk is quite mobile in the ribosome, and is involved in E site tRNA release. In terms of biological role, protein L1 is also a translational repressor protein, it controls the translation of the L11 operon by binding to its mRNA. In Metamycoplasma arthritidis (strain 158L3-1) (Mycoplasma arthritidis), this protein is Large ribosomal subunit protein uL1.